We begin with the raw amino-acid sequence, 132 residues long: DNA-directed RNA polymerase subunit omega (132 aa).

This sequence belongs to the RNA polymerase subunit omega family. The RNAP catalytic core consists of 2 alpha, 1 beta, 1 beta' and 1 omega subunit. When a sigma factor is associated with the core the holoenzyme is formed, which can initiate transcription.

It carries out the reaction RNA(n) + a ribonucleoside 5'-triphosphate = RNA(n+1) + diphosphate. In terms of biological role, promotes RNA polymerase assembly. Latches the N- and C-terminal regions of the beta' subunit thereby facilitating its interaction with the beta and alpha subunits. The polypeptide is DNA-directed RNA polymerase subunit omega (Bartonella bacilliformis (strain ATCC 35685 / KC583 / Herrer 020/F12,63)).